A 223-amino-acid polypeptide reads, in one-letter code: Deoxyribose-phosphate aldolase (223 aa).

Catalysis depends on Asp89, which acts as the Proton donor/acceptor. Lys152 functions as the Schiff-base intermediate with acetaldehyde in the catalytic mechanism. The active-site Proton donor/acceptor is Lys181.

This sequence belongs to the DeoC/FbaB aldolase family. DeoC type 1 subfamily.

The protein resides in the cytoplasm. The enzyme catalyses 2-deoxy-D-ribose 5-phosphate = D-glyceraldehyde 3-phosphate + acetaldehyde. It participates in carbohydrate degradation; 2-deoxy-D-ribose 1-phosphate degradation; D-glyceraldehyde 3-phosphate and acetaldehyde from 2-deoxy-alpha-D-ribose 1-phosphate: step 2/2. Functionally, catalyzes a reversible aldol reaction between acetaldehyde and D-glyceraldehyde 3-phosphate to generate 2-deoxy-D-ribose 5-phosphate. This is Deoxyribose-phosphate aldolase from Bacillus mycoides (strain KBAB4) (Bacillus weihenstephanensis).